Here is a 63-residue protein sequence, read N- to C-terminus: Large ribosomal subunit protein uL29 (63 aa).

This sequence belongs to the universal ribosomal protein uL29 family.

This chain is Large ribosomal subunit protein uL29, found in Glaesserella parasuis serovar 5 (strain SH0165) (Haemophilus parasuis).